The sequence spans 71 residues: Small ribosomal subunit protein bS21 (71 aa).

This sequence belongs to the bacterial ribosomal protein bS21 family.

In Cellvibrio japonicus (strain Ueda107) (Pseudomonas fluorescens subsp. cellulosa), this protein is Small ribosomal subunit protein bS21.